Consider the following 361-residue polypeptide: Peptide chain release factor 1 (361 aa).

An N5-methylglutamine modification is found at Q238.

Belongs to the prokaryotic/mitochondrial release factor family. In terms of processing, methylated by PrmC. Methylation increases the termination efficiency of RF1.

It localises to the cytoplasm. Its function is as follows. Peptide chain release factor 1 directs the termination of translation in response to the peptide chain termination codons UAG and UAA. The sequence is that of Peptide chain release factor 1 from Mesomycoplasma hyopneumoniae (strain J / ATCC 25934 / NCTC 10110) (Mycoplasma hyopneumoniae).